The sequence spans 989 residues: DNA-directed RNA polymerase subunit beta' (989 aa).

The Mg(2+) site is built by Asp383, Asp385, and Asp387.

It belongs to the RNA polymerase beta' chain family. As to quaternary structure, the RNAP catalytic core consists of 2 alpha, 1 beta, 1 beta' and 1 omega subunit. When a sigma factor is associated with the core the holoenzyme is formed, which can initiate transcription. The cofactor is Mg(2+).

It carries out the reaction RNA(n) + a ribonucleoside 5'-triphosphate = RNA(n+1) + diphosphate. Its function is as follows. DNA-dependent RNA polymerase catalyzes the transcription of DNA into RNA using the four ribonucleoside triphosphates as substrates. This is DNA-directed RNA polymerase subunit beta' (rpoC) from Leuconostoc pseudomesenteroides.